Here is a 503-residue protein sequence, read N- to C-terminus: GMP synthase [glutamine-hydrolyzing] (503 aa).

Residues 1 to 189 (MVLVLDFGSQ…FLELAGVKRD (189 aa)) form the Glutamine amidotransferase type-1 domain. The active-site Nucleophile is the Cys-78. Active-site residues include His-164 and Glu-166. A GMPS ATP-PPase domain is found at 190 to 378 (WTPEHVLEEL…LGLPDTLRLR (189 aa)). 217–223 (SGGVDSS) contacts ATP.

Homodimer.

The enzyme catalyses XMP + L-glutamine + ATP + H2O = GMP + L-glutamate + AMP + diphosphate + 2 H(+). The protein operates within purine metabolism; GMP biosynthesis; GMP from XMP (L-Gln route): step 1/1. Its function is as follows. Catalyzes the synthesis of GMP from XMP. The polypeptide is GMP synthase [glutamine-hydrolyzing] (Thermus thermophilus (strain ATCC 27634 / DSM 579 / HB8)).